Here is a 552-residue protein sequence, read N- to C-terminus: Glutamate--tRNA ligase (552 aa).

Residues 41-51 (PSPTGFQHIGG) carry the 'HIGH' region motif. The short motif at 293-297 (KLSKR) is the 'KMSKS' region element. An ATP-binding site is contributed by Lys-296.

Belongs to the class-I aminoacyl-tRNA synthetase family. Glutamate--tRNA ligase type 1 subfamily. In terms of assembly, monomer.

It is found in the cytoplasm. It catalyses the reaction tRNA(Glu) + L-glutamate + ATP = L-glutamyl-tRNA(Glu) + AMP + diphosphate. In terms of biological role, catalyzes the attachment of glutamate to tRNA(Glu) in a two-step reaction: glutamate is first activated by ATP to form Glu-AMP and then transferred to the acceptor end of tRNA(Glu). The sequence is that of Glutamate--tRNA ligase from Clostridium perfringens (strain SM101 / Type A).